Consider the following 145-residue polypeptide: Basic phospholipase A2 cL037 (145 aa).

A signal peptide spans 1–21 (MYPAHLLVLLAVCVSLLGASA). Positions 22–27 (ILPLPL) are excised as a propeptide. 7 cysteine pairs are disulfide-bonded: cysteine 38/cysteine 98, cysteine 54/cysteine 144, cysteine 56/cysteine 72, cysteine 71/cysteine 125, cysteine 78/cysteine 118, cysteine 87/cysteine 111, and cysteine 105/cysteine 116. Residues tyrosine 55, glycine 57, and glycine 59 each coordinate Ca(2+). Residue histidine 75 is part of the active site. Residue aspartate 76 coordinates Ca(2+). The active site involves aspartate 119.

Belongs to the phospholipase A2 family. Group I subfamily. D49 sub-subfamily. Requires Ca(2+) as cofactor. Expressed by the venom gland.

The protein resides in the secreted. The enzyme catalyses a 1,2-diacyl-sn-glycero-3-phosphocholine + H2O = a 1-acyl-sn-glycero-3-phosphocholine + a fatty acid + H(+). PLA2 catalyzes the calcium-dependent hydrolysis of the 2-acyl groups in 3-sn-phosphoglycerides. The protein is Basic phospholipase A2 cL037 of Laticauda semifasciata (Black-banded sea krait).